A 636-amino-acid polypeptide reads, in one-letter code: 1-deoxy-D-xylulose-5-phosphate synthase (636 aa).

Thiamine diphosphate contacts are provided by residues His-72 and 113–115 (GHA). Mg(2+) is bound at residue Asp-144. Residues 145-146 (GS), Asn-174, Tyr-287, and Glu-370 each bind thiamine diphosphate. Residue Asn-174 coordinates Mg(2+).

It belongs to the transketolase family. DXPS subfamily. Homodimer. It depends on Mg(2+) as a cofactor. Thiamine diphosphate is required as a cofactor.

It carries out the reaction D-glyceraldehyde 3-phosphate + pyruvate + H(+) = 1-deoxy-D-xylulose 5-phosphate + CO2. Its pathway is metabolic intermediate biosynthesis; 1-deoxy-D-xylulose 5-phosphate biosynthesis; 1-deoxy-D-xylulose 5-phosphate from D-glyceraldehyde 3-phosphate and pyruvate: step 1/1. In terms of biological role, catalyzes the acyloin condensation reaction between C atoms 2 and 3 of pyruvate and glyceraldehyde 3-phosphate to yield 1-deoxy-D-xylulose-5-phosphate (DXP). This is 1-deoxy-D-xylulose-5-phosphate synthase from Synechococcus elongatus (strain ATCC 33912 / PCC 7942 / FACHB-805) (Anacystis nidulans R2).